A 920-amino-acid chain; its full sequence is Isoleucine--tRNA ligase (920 aa).

A 'HIGH' region motif is present at residues 58–68 (PYANGHLHLGH). Glu569 lines the L-isoleucyl-5'-AMP pocket. The short motif at 610–614 (KMSKS) is the 'KMSKS' region element. An ATP-binding site is contributed by Lys613. Zn(2+) is bound by residues Cys895, Cys898, Cys910, and Cys913.

This sequence belongs to the class-I aminoacyl-tRNA synthetase family. IleS type 1 subfamily. In terms of assembly, monomer. It depends on Zn(2+) as a cofactor.

It is found in the cytoplasm. The catalysed reaction is tRNA(Ile) + L-isoleucine + ATP = L-isoleucyl-tRNA(Ile) + AMP + diphosphate. In terms of biological role, catalyzes the attachment of isoleucine to tRNA(Ile). As IleRS can inadvertently accommodate and process structurally similar amino acids such as valine, to avoid such errors it has two additional distinct tRNA(Ile)-dependent editing activities. One activity is designated as 'pretransfer' editing and involves the hydrolysis of activated Val-AMP. The other activity is designated 'posttransfer' editing and involves deacylation of mischarged Val-tRNA(Ile). This Helicobacter pylori (strain ATCC 700392 / 26695) (Campylobacter pylori) protein is Isoleucine--tRNA ligase.